The primary structure comprises 462 residues: Nitrate/nitrite transporter NarU (462 aa).

Over Met-1–Asn-35 the chain is Cytoplasmic. A helical transmembrane segment spans residues Leu-36 to Val-56. The Periplasmic portion of the chain corresponds to Ala-57–Gln-71. The helical transmembrane segment at Leu-72–Phe-92 threads the bilayer. The Cytoplasmic segment spans residues Met-93–Lys-101. A helical membrane pass occupies residues Trp-102–Gln-122. The Periplasmic portion of the chain corresponds to Asn-123 to Pro-124. The helical transmembrane segment at Ala-125 to Phe-145 threads the bilayer. Residues Ala-146–Gln-180 lie on the Cytoplasmic side of the membrane. A helical transmembrane segment spans residues Leu-181–Pro-201. At Gln-202–Ser-206 the chain is on the periplasmic side. A helical membrane pass occupies residues Leu-207–Ala-227. At Ala-228–Ser-258 the chain is on the cytoplasmic side. Residues Leu-259–Ala-279 traverse the membrane as a helical segment. Residues Lys-280–Asn-287 lie on the Periplasmic side of the membrane. Residues Ile-288 to Val-308 form a helical membrane-spanning segment. Residues Ile-309–Arg-317 are Cytoplasmic-facing. Residues Val-318–Pro-338 form a helical membrane-spanning segment. Residues Gly-339–Gly-341 are Periplasmic-facing. A helical transmembrane segment spans residues Ala-342 to Gly-362. Residues Ser-363–Ala-401 lie on the Cytoplasmic side of the membrane. A helical membrane pass occupies residues Ala-402–Phe-422. Residues Gly-423–Pro-432 lie on the Periplasmic side of the membrane. A helical membrane pass occupies residues Val-433–Val-453. Over Tyr-454–Gln-462 the chain is Cytoplasmic.

The protein belongs to the major facilitator superfamily. Nitrate/nitrite porter (TC 2.A.1.8) family.

It localises to the cell inner membrane. Catalyzes nitrate uptake, nitrite uptake and nitrite export across the cytoplasmic membrane. The chain is Nitrate/nitrite transporter NarU (narU) from Salmonella typhimurium (strain LT2 / SGSC1412 / ATCC 700720).